A 204-amino-acid polypeptide reads, in one-letter code: B9 domain-containing protein 1 (204 aa).

Residues 9 to 127 enclose the C2 B9-type domain; sequence FLLMVNGQVE…TIPMFVPEST (119 aa). Residues 182–204 are disordered; it reads GYDTGPSDTQGVLGPSPPQSFPQ.

The protein belongs to the B9D family. Part of the tectonic-like complex (also named B9 complex).

It is found in the cytoplasm. The protein localises to the cytoskeleton. The protein resides in the cilium basal body. It localises to the cilium axoneme. Component of the tectonic-like complex, a complex localized at the transition zone of primary cilia and acting as a barrier that prevents diffusion of transmembrane proteins between the cilia and plasma membranes. Required for ciliogenesis and sonic hedgehog/SHH signaling. The chain is B9 domain-containing protein 1 (B9D1) from Homo sapiens (Human).